Consider the following 125-residue polypeptide: Large ribosomal subunit protein bL12 (125 aa).

The protein belongs to the bacterial ribosomal protein bL12 family. As to quaternary structure, homodimer. Part of the ribosomal stalk of the 50S ribosomal subunit. Forms a multimeric L10(L12)X complex, where L10 forms an elongated spine to which 2 to 4 L12 dimers bind in a sequential fashion. Binds GTP-bound translation factors.

Forms part of the ribosomal stalk which helps the ribosome interact with GTP-bound translation factors. Is thus essential for accurate translation. This chain is Large ribosomal subunit protein bL12, found in Francisella tularensis subsp. tularensis (strain SCHU S4 / Schu 4).